The following is a 590-amino-acid chain: Interferon alpha/beta receptor 1 (590 aa).

An N-terminal signal peptide occupies residues 1–26; it reads MLAVVGAAALVLVAGAPWVLPSAAGG. The Extracellular segment spans residues 27 to 429; sequence ENLKPPENID…EKTRPGSFST (403 aa). Fibronectin type-III domains are found at residues 31–125, 127–226, 230–327, and 332–425; these read PPEN…PFYT, HMSP…TTVA, PVPG…FIDS, and LPPP…TRPG. N-linked (GlcNAc...) asparagine glycosylation occurs at Asn43. An intrachain disulfide couples Cys78 to Cys86. Residues Asn109, Asn181, and Asn214 are each glycosylated (N-linked (GlcNAc...) asparagine). 2 cysteine pairs are disulfide-bonded: Cys199-Cys220 and Cys284-Cys292. Residues Asn314, Asn370, Asn409, and Asn413 are each glycosylated (N-linked (GlcNAc...) asparagine). Residues Cys397 and Cys419 are joined by a disulfide bond. The helical transmembrane segment at 430–449 threads the bilayer; it reads IWIITGLGVVFFSVMVLYAL. The Cytoplasmic segment spans residues 450 to 590; sequence RSVWKYLCHV…ALRTEPALLC (141 aa). The segment at 483 to 492 is important for interaction with TYK2; it reads VLLTAEEHTE. Positions 514 to 545 are disordered; that stretch reads DLRKYSSQTSQDSGNYSNEEEESVGTESGQAV. Lys517 is covalently cross-linked (Glycyl lysine isopeptide (Lys-Gly) (interchain with G-Cter in ubiquitin)). Over residues 518–530 the composition is skewed to polar residues; the sequence is YSSQTSQDSGNYS. Ser526 carries the phosphoserine modification.

It belongs to the type II cytokine receptor family. In terms of assembly, heterodimer with IFNAR2; forming the receptor for type I interferon. Interacts with TYK2. Interacts with STAT1 and STAT2. Interacts (serine-phosphorylated form) with FBXW11, the substrate recognition component of a SCF (SKP1-CUL1-F-box protein) E3 ubiquitin-protein ligase complex. 3Interacts with SHMT2; this promotes interaction with ABRAXAS2 and the BRISC complex. Interacts with TRIM10; this interaction prevents association between IFNAR1 and TYK2. Ubiquitinated. This leads to its internalization and lysosomal degradation. The 'Lys-63'-linked ubiquitin chains are cleaved off by the BRISC complex; this prevents receptor internalization and degradation. Probable ubiquitination sites have been identified in human, but are poorly conserved across species. Post-translationally, phosphorylated on serine residues in response to interferon binding; this promotes interaction with FBXW11 and ubiquitination.

The protein resides in the cell membrane. Its subcellular location is the late endosome. The protein localises to the lysosome. Its function is as follows. Together with IFNAR2, forms the heterodimeric receptor for type I interferons (including interferons alpha, beta, epsilon, omega and kappa). Type I interferon binding activates the JAK-STAT signaling cascade, and triggers tyrosine phosphorylation of a number of proteins including JAKs, TYK2, STAT proteins and the IFNR alpha- and beta-subunits themselves. STAT proteins are then phosphorylated by the JAKs, promoting their translocation into the nucleus to regulate expression of interferon-regulated genes. Can also act independently of IFNAR2: form an active IFNB1 receptor by itself and activate a signaling cascade that does not involve activation of the JAK-STAT pathway. This is Interferon alpha/beta receptor 1 (Ifnar1) from Mus musculus (Mouse).